The sequence spans 681 residues: Envelope glycoprotein (681 aa).

A signal peptide spans 1 to 18 (MKTIYFLISLILIQSIKT). Over 19–648 (LPVLEIASNS…GLGGKWWTSD (630 aa)) the chain is Extracellular. Residues 38 to 188 (SGTLQKTEDV…FSRQGQGYRH (151 aa)) are receptor-binding. Asn94, Asn171, Asn190, Asn202, Asn207, Asn219, and Asn223 each carry an N-linked (GlcNAc...) asparagine; by host glycan. A disordered region spans residues 223–428 (NQTCPPSLKP…PDSSPTTRPP (206 aa)). Polar residues-rich tracts occupy residues 236-260 (PTVTPSIHSTNTQINTAKSGTMNPS) and 278-315 (PHTTLNVVTEQKQSSTILSTPSLHPSTSQHEQNSTNPS). Positions 277 to 455 (GPHTTLNVVT…PFLDGLINTE (179 aa)) are mucin-like region. Asn310, Asn323, Asn336, Asn350, Asn360, Asn364, Asn381, Asn397, Asn475, and Asn487 each carry an N-linked (GlcNAc...) asparagine; by host glycan. Residues 327–347 (PTTQPATLLNNTNTTPTYNTL) are compositionally biased toward low complexity. 2 stretches are compositionally biased toward polar residues: residues 348–365 (KYNLSTPSPPTRNITNND) and 373–394 (SEQTNAQLNTTLDPTENPTTGQ). Positions 395–428 (DTNSTTNIIMTTSDITSKHPTNSSPDSSPTTRPP) are enriched in low complexity. The segment at 529 to 549 (GLSWIPFFGPGIEGLYTAGLI) is fusion peptide. 2 N-linked (GlcNAc...) asparagine; by host glycosylation sites follow: Asn564 and Asn619. The helical transmembrane segment at 649–669 (WGVLTNLGILLLLSIAVLIAL) threads the bilayer. At 670–681 (SCICRIFTKYIG) the chain is on the cytoplasmic side. Residues Cys671 and Cys673 are each lipidated (S-palmitoyl cysteine; by host).

This sequence belongs to the filoviruses glycoprotein family. In terms of assembly, homotrimer; each monomer consists of a GP1 and a GP2 subunit linked by disulfide bonds. The resulting peplomers (GP1,2) protrude from the virus surface as spikes. GP1,2 interacts with human CD209 and CLEC4M (collectively referred to as DC-SIGN(R)). Asialoglycoprotein receptor (ASGP-R) may be a liver-specific receptor for GP1,2. Members of the Tyro3 receptor tyrosine kinase family may be cell entry factors interacting with GP1,2. N-glycosylated. In terms of processing, O-glycosylated in the mucin-like region. Post-translationally, specific enzymatic cleavages in vivo yield mature proteins. The precursor is processed into GP1 and GP2 by host cell furin in the trans Golgi, and maybe by other host proteases, to yield the mature GP1 and GP2 proteins. The cleavage site corresponds to the furin optimal cleavage sequence [KR]-X-[KR]-R. GP1 is phosphorylated on serine residues between residues 260 and 273.

The protein localises to the virion membrane. Its subcellular location is the host cell membrane. Functionally, GP1 is responsible for binding to the receptor(s) on target cells. Interacts with CD209/DC-SIGN and CLEC4M/DC-SIGNR which act as cofactors for virus entry into the host cell. Binding to CD209 and CLEC4M, which are respectively found on dendritic cells (DCs), and on endothelial cells of liver sinusoids and lymph node sinuses, facilitate infection of macrophages and endothelial cells. These interactions not only facilitate virus cell entry, but also allow capture of viral particles by DCs and subsequent transmission to susceptible cells without DCs infection (trans infection). GP2 acts as a class I viral fusion protein. Under the current model, the protein has at least 3 conformational states: pre-fusion native state, pre-hairpin intermediate state, and post-fusion hairpin state. During viral and target cell membrane fusion, the coiled coil regions (heptad repeats) assume a trimer-of-hairpins structure, positioning the fusion peptide in close proximity to the C-terminal region of the ectodomain. The formation of this structure appears to drive apposition and subsequent fusion of viral and target cell membranes. Responsible for penetration of the virus into the cell cytoplasm by mediating the fusion of the membrane of the endocytosed virus particle with the endosomal membrane. Low pH in endosomes induces an irreversible conformational change in GP2, releasing the fusion hydrophobic peptide. This is Envelope glycoprotein (GP) from Chlorocebus aethiops (Green monkey).